The following is a 494-amino-acid chain: Glutamate--tRNA ligase (494 aa).

Residues 10–20 carry the 'HIGH' region motif; sequence PSPTGDPHVGT. The Zn(2+) site is built by Cys107, Cys109, Cys134, and His136. Residues 251-255 carry the 'KMSKS' region motif; it reads KLSKR. Lys254 contributes to the ATP binding site.

Belongs to the class-I aminoacyl-tRNA synthetase family. Glutamate--tRNA ligase type 1 subfamily. Monomer. The cofactor is Zn(2+).

The protein resides in the cytoplasm. The catalysed reaction is tRNA(Glu) + L-glutamate + ATP = L-glutamyl-tRNA(Glu) + AMP + diphosphate. In terms of biological role, catalyzes the attachment of glutamate to tRNA(Glu) in a two-step reaction: glutamate is first activated by ATP to form Glu-AMP and then transferred to the acceptor end of tRNA(Glu). This is Glutamate--tRNA ligase from Pseudomonas aeruginosa (strain ATCC 15692 / DSM 22644 / CIP 104116 / JCM 14847 / LMG 12228 / 1C / PRS 101 / PAO1).